Reading from the N-terminus, the 800-residue chain is Receptor-like protein 47 (800 aa).

A signal peptide spans methionine 1–alanine 31. At lysine 32–glutamine 759 the chain is on the extracellular side. Asparagine 66 and asparagine 102 each carry an N-linked (GlcNAc...) asparagine glycan. 23 LRR repeats span residues glutamine 109–asparagine 131, lysine 133–leucine 156, serine 157–asparagine 179, leucine 190–serine 213, leucine 214–isoleucine 238, serine 240–serine 262, proline 263–proline 288, tyrosine 294–proline 311, serine 312–glutamine 334, threonine 335–leucine 358, glutamate 360–glycine 383, arginine 385–valine 406, valine 407–leucine 430, aspartate 431–asparagine 453, histidine 455–histidine 477, leucine 479–cysteine 500, aspartate 502–leucine 523, leucine 524–phenylalanine 550, serine 551–glycine 574, phenylalanine 621–leucine 645, lysine 646–leucine 669, serine 670–leucine 693, and phenylalanine 695–threonine 718. Asparagine 155 is a glycosylation site (N-linked (GlcNAc...) asparagine). N-linked (GlcNAc...) asparagine glycosylation is present at asparagine 210. An N-linked (GlcNAc...) asparagine glycan is attached at asparagine 259. N-linked (GlcNAc...) asparagine glycans are attached at residues asparagine 323 and asparagine 333. Asparagine 365 is a glycosylation site (N-linked (GlcNAc...) asparagine). Asparagine 442, asparagine 465, asparagine 499, and asparagine 514 each carry an N-linked (GlcNAc...) asparagine glycan. Residue asparagine 668 is glycosylated (N-linked (GlcNAc...) asparagine). Asparagine 700 carries N-linked (GlcNAc...) asparagine glycosylation. Residues valine 760–isoleucine 780 traverse the membrane as a helical segment. At glycine 781–threonine 800 the chain is on the cytoplasmic side.

It belongs to the RLP family.

Its subcellular location is the cell membrane. The chain is Receptor-like protein 47 from Arabidopsis thaliana (Mouse-ear cress).